A 124-amino-acid polypeptide reads, in one-letter code: Fluoride-specific ion channel FluC (124 aa).

3 helical membrane passes run 5–27 (LFVA…FMLQ), 70–90 (VGLL…LLLI), and 95–115 (WIKA…MVYL). 2 residues coordinate Na(+): glycine 74 and threonine 77.

It belongs to the fluoride channel Fluc/FEX (TC 1.A.43) family.

The protein localises to the cell inner membrane. The catalysed reaction is fluoride(in) = fluoride(out). Na(+) is not transported, but it plays an essential structural role and its presence is essential for fluoride channel function. Fluoride-specific ion channel. Important for reducing fluoride concentration in the cell, thus reducing its toxicity. This is Fluoride-specific ion channel FluC from Shewanella sediminis (strain HAW-EB3).